Consider the following 352-residue polypeptide: Neuronal growth regulator 1 (352 aa).

The N-terminal stretch at 1–35 is a signal peptide; sequence MVPLVRGAGGSHQWLAAVLLGLCCLLPAGRLAAPG. 3 consecutive Ig-like C2-type domains span residues 36 to 132, 137 to 219, and 223 to 311; these read GDFP…VHLT, PKIF…KVTV, and PTIQ…LPLN. Cys-58 and Cys-116 are joined by a disulfide. Residues Asn-71 and Asn-153 are each glycosylated (N-linked (GlcNAc...) asparagine). 2 disulfides stabilise this stretch: Cys-158/Cys-201 and Cys-243/Cys-295. Residues Asn-273, Asn-284, Asn-292, and Asn-305 are each glycosylated (N-linked (GlcNAc...) asparagine). The GPI-anchor amidated glycine moiety is linked to residue Gly-322. Positions 323–352 are cleaved as a propeptide — removed in mature form; that stretch reads DAEVLFSCWYLVLTLSSLTSIFYLKNIILH.

The protein belongs to the immunoglobulin superfamily. IgLON family. As to quaternary structure, interacts with CEPU-1 and LAMP. In terms of processing, glycosylated. Expressed in embryonic retina, telencephalon, tectum, cerebellum and diencephalon (at protein level).

The protein localises to the cell membrane. Its function is as follows. May be involved in cell-adhesion. May participate in the regulation of neurite outgrowth in the developing brain. The polypeptide is Neuronal growth regulator 1 (NEGR1) (Gallus gallus (Chicken)).